The primary structure comprises 260 residues: Acetylglutamate kinase (260 aa).

Substrate is bound by residues 41–42, Arg-63, and Asn-156; that span reads GG.

Belongs to the acetylglutamate kinase family. ArgB subfamily.

The protein localises to the cytoplasm. The catalysed reaction is N-acetyl-L-glutamate + ATP = N-acetyl-L-glutamyl 5-phosphate + ADP. Its pathway is amino-acid biosynthesis; L-arginine biosynthesis; N(2)-acetyl-L-ornithine from L-glutamate: step 2/4. Its function is as follows. Catalyzes the ATP-dependent phosphorylation of N-acetyl-L-glutamate. This Halalkalibacterium halodurans (strain ATCC BAA-125 / DSM 18197 / FERM 7344 / JCM 9153 / C-125) (Bacillus halodurans) protein is Acetylglutamate kinase.